Reading from the N-terminus, the 123-residue chain is Fluoride-specific ion channel FluC (123 aa).

Transmembrane regions (helical) follow at residues 1 to 21 (MLEI…RYLM), 32 to 52 (ILSL…GLVI), 64 to 84 (IGLL…SFSY), and 99 to 119 (FGYT…GIYL). 2 residues coordinate Na(+): Gly74 and Thr77.

The protein belongs to the fluoride channel Fluc/FEX (TC 1.A.43) family.

Its subcellular location is the cell inner membrane. It carries out the reaction fluoride(in) = fluoride(out). Na(+) is not transported, but it plays an essential structural role and its presence is essential for fluoride channel function. Fluoride-specific ion channel. Important for reducing fluoride concentration in the cell, thus reducing its toxicity. This Gloeothece citriformis (strain PCC 7424) (Cyanothece sp. (strain PCC 7424)) protein is Fluoride-specific ion channel FluC.